A 599-amino-acid polypeptide reads, in one-letter code: MDIGDLPEASKTQSPKSYLYTSIARNHLGDVAALIISCLISYGRLTATDISHRTKIPVKKVKSALVSLIQMNCIFYWRESGSKQVFYSFNETGILVFLHSGDIISHVTTHYGEDSAEIVQNILVNGHIRIEDYVNNIDDEEKKLDIQTLFFRLFTDRWIVRLQPFNFNPVDDIWNQLYQETLKNTPRTSTTSEVKRVAEAKEKTKTKFINLIESGQSPKDLYLTQDGIKRLNPALVVTFNLSRFQKHLRTTALVSLAKSRVGLLSARIYESALKLVEASSPDLTHPFLQISGLINDPEEARFFVNSIENKLVDEKKTVFNVRDLGRLLPHDLDLRNSILTYNFVKHNLTPKKRSASNGDDERPTKKIKTEDSDDIAESLESNGTVQIESNGNGNSISLIQHHLKLLSSGSGAQLLIEITPGSYTVPYASLLKYLKQYNFETLVKTTLGPNSFRILRCLKSLKIGDEKTISNSVLLKEKTVRNEIYKLLKANMLEVQEVPRSADRAASKTFYLFRHKEFYSYEFLCNSLIFSMAEILSNIQAFREDHKILLEKCEREDVKGHEEELLLESELKTLKSLQTRQVSNTVRFNRIKSLYEIYQ.

The segment at 350–375 (PKKRSASNGDDERPTKKIKTEDSDDI) is disordered. The span at 359 to 370 (DDERPTKKIKTE) shows a compositional bias: basic and acidic residues. A leucine-zipper region spans residues 528–549 (LIFSMAEILSNIQAFREDHKIL).

The protein belongs to the RNA polymerase beta chain family. Component of the RNA polymerase III (Pol III) complex consisting of 17 subunits.

The protein resides in the nucleus. Its function is as follows. DNA-dependent RNA polymerase catalyzes the transcription of DNA into RNA using the four ribonucleoside triphosphates as substrates. Specific core component of RNA polymerase III which synthesizes small RNAs, such as 5S rRNA and tRNAs. In Scheffersomyces stipitis (strain ATCC 58785 / CBS 6054 / NBRC 10063 / NRRL Y-11545) (Yeast), this protein is DNA-directed RNA polymerase III subunit RPC3 (RPC82).